Here is a 52-residue protein sequence, read N- to C-terminus: Insulin-2 (52 aa).

3 disulfides stabilise this stretch: Cys7-Cys38, Cys19-Cys51, and Cys37-Cys42.

It belongs to the insulin family. Heterodimer of a B chain and an A chain linked by two disulfide bonds.

The protein resides in the secreted. Its function is as follows. Insulin decreases blood glucose concentration. It increases cell permeability to monosaccharides, amino acids and fatty acids. It accelerates glycolysis, the pentose phosphate cycle, and glycogen synthesis in liver. The chain is Insulin-2 from Huso dauricus (Kaluga sturgeon).